The sequence spans 473 residues: Suppressor of SWI4 1 homolog (473 aa).

The Brix domain occupies 29–292; sequence PHSFVFTRGC…LIKVQEGVGE (264 aa). Serine 238 and serine 240 each carry phosphoserine. The interval 323–473 is disordered; sequence AQRQAQQAQN…GRGRPRKRVA (151 aa). Residues 324–334 are compositionally biased toward low complexity; sequence QRQAQQAQNVQ. Basic and acidic residues predominate over residues 335–360; that stretch reads RKQEQREAHRKKSLEGMKKARVRGGD. A compositionally biased stretch (acidic residues) spans 376 to 388; it reads GEDDDEQEDDDIE. The segment covering 407–421 has biased composition (basic residues); it reads KRKRLAKSPGQKRKR. The segment covering 422 to 444 has biased composition (basic and acidic residues); sequence REMDRGRGRLCDQKFPKPKDKSH. The residue at position 438 (lysine 438) is an N6-acetyllysine. The segment covering 464 to 473 has biased composition (basic residues); the sequence is GRGRPRKRVA.

Its subcellular location is the nucleus. The protein localises to the nucleolus. Functionally, may have a role in cell growth. This chain is Suppressor of SWI4 1 homolog (PPAN), found in Pongo abelii (Sumatran orangutan).